A 107-amino-acid chain; its full sequence is MVAPKIRIKLRGFDHKALDQSASKIVDTVRRTGADVSGPVPLPTRIRRFCVLRSPFKYKDAREHFEIRTHNRLVDIMNPTKKTIDSLMTLDLPTGVDIEIKTVGGRA.

It belongs to the universal ribosomal protein uS10 family. As to quaternary structure, part of the 30S ribosomal subunit.

Functionally, involved in the binding of tRNA to the ribosomes. The protein is Small ribosomal subunit protein uS10 of Deinococcus deserti (strain DSM 17065 / CIP 109153 / LMG 22923 / VCD115).